The sequence spans 179 residues: Negative modulator of initiation of replication (179 aa).

The protein belongs to the SeqA family. Homodimer. Polymerizes to form helical filaments.

The protein localises to the cytoplasm. In terms of biological role, negative regulator of replication initiation, which contributes to regulation of DNA replication and ensures that replication initiation occurs exactly once per chromosome per cell cycle. Binds to pairs of hemimethylated GATC sequences in the oriC region, thus preventing assembly of replication proteins and re-initiation at newly replicated origins. Repression is relieved when the region becomes fully methylated. This chain is Negative modulator of initiation of replication, found in Vibrio atlanticus (strain LGP32) (Vibrio splendidus (strain Mel32)).